Here is a 389-residue protein sequence, read N- to C-terminus: Type 2 DNA topoisomerase 6 subunit A (389 aa).

Positions 13–161 (KARLRAAEVM…MLILSKEKGK (149 aa)) constitute a Topo IIA-type catalytic domain. Tyrosine 107 serves as the catalytic O-(5'-phospho-DNA)-tyrosine intermediate. The Mg(2+) site is built by glutamate 208 and aspartate 260.

The protein belongs to the TOP6A family. As to quaternary structure, homodimer. Heterotetramer of two Top6A and two Top6B chains. It depends on Mg(2+) as a cofactor.

It carries out the reaction ATP-dependent breakage, passage and rejoining of double-stranded DNA.. Functionally, relaxes both positive and negative superturns and exhibits a strong decatenase activity. In Aeropyrum pernix (strain ATCC 700893 / DSM 11879 / JCM 9820 / NBRC 100138 / K1), this protein is Type 2 DNA topoisomerase 6 subunit A.